The primary structure comprises 203 residues: Sarcosine oxidase subunit gamma (203 aa).

Belongs to the SoxG family. As to quaternary structure, heterotetramer composed of subunits alpha (SoxA), beta (SoxB), gamma (SoxG) and delta (SoxD).

The protein resides in the cytoplasm. The enzyme catalyses sarcosine + (6S)-5,6,7,8-tetrahydrofolate + O2 = (6R)-5,10-methylene-5,6,7,8-tetrahydrofolate + glycine + H2O2. It carries out the reaction sarcosine + O2 + H2O = formaldehyde + glycine + H2O2. Functionally, in the presence of tetrahydrofolate, catalyzes the oxidative demethylation of sarcosine to yield glycine, 5,10-methylenetetrahydrofolate and hydrogen peroxide. In the absence of tetrahydrofolate, catalyzes the oxidative demethylation of sarcosine to yield glycine, formaldehyde and hydrogen peroxide. The sequence is that of Sarcosine oxidase subunit gamma (soxG) from Arthrobacter sp.